The chain runs to 102 residues: Circadian clock oscillator protein KaiA (102 aa).

Positions methionine 1 to lysine 102 constitute a KaiA C-terminal domain.

It belongs to the KaiA family. Homodimer. The KaiABC complex composition changes during the circadian cycle to control KaiC phosphorylation. Complexes KaiC(6), KaiA(2-4):KaiC(6), KaiB(6):KaiC(6) and KaiC(6):KaiB(6):KaiA(12) are among the most important forms, many form cooperatively. KaiA and CikA bind to the same region of the KaiB(fs) form and therefore compete.

In terms of biological role, key component of the KaiABC oscillator complex, which constitutes the main circadian regulator in cyanobacteria. Complex composition changes during the circadian cycle to control KaiC phosphorylation. KaiA stimulates KaiC autophosphorylation, while KaiB sequesters KaiA, leading to KaiC autodephosphorylation. KaiA binding to the KaiC CII domain during the subjective day yields KaiA(2-4):KaiC(6) complexes which stimulate KaiC autophosphorylation. Phospho-Ser-431 KaiC accumulation triggers binding of KaiB during the subjective night to form the KaiB(6):KaiC(6) complex, leading to changes in the output regulators CikA and SasA. KaiB(6):KaiC(6) formation exposes a site for KaiA binding on KaiB that sequesters KaiA from KaiC's CII domain, making the KaiC(6):KaiB(6):KaiA(12) complex resulting in KaiC autodephosphorylation. Complete dephosphorylation of KaiC leads to dissociation of KaiA(2):KaiB(1), completing 1 cycle of the Kai oscillator. The chain is Circadian clock oscillator protein KaiA from Nostoc sp. (strain PCC 7120 / SAG 25.82 / UTEX 2576).